The following is a 256-amino-acid chain: Phosphatidylglycerol--prolipoprotein diacylglyceryl transferase 2 (256 aa).

The next 3 membrane-spanning stretches (helical) occupy residues 11–31 (LKIY…TLLF), 46–66 (FNAT…LYII), and 83–103 (FGNG…IALC). Arg130 is an a 1,2-diacyl-sn-glycero-3-phospho-(1'-sn-glycerol) binding site. 3 helical membrane-spanning segments follow: residues 142–162 (AETT…PAGV), 164–184 (LYPT…FLLW), and 221–241 (VGLL…GILL).

Belongs to the Lgt family.

The protein resides in the cell membrane. It carries out the reaction L-cysteinyl-[prolipoprotein] + a 1,2-diacyl-sn-glycero-3-phospho-(1'-sn-glycerol) = an S-1,2-diacyl-sn-glyceryl-L-cysteinyl-[prolipoprotein] + sn-glycerol 1-phosphate + H(+). Its pathway is protein modification; lipoprotein biosynthesis (diacylglyceryl transfer). Its function is as follows. Catalyzes the transfer of the diacylglyceryl group from phosphatidylglycerol to the sulfhydryl group of the N-terminal cysteine of a prolipoprotein, the first step in the formation of mature lipoproteins. The chain is Phosphatidylglycerol--prolipoprotein diacylglyceryl transferase 2 from Clostridium perfringens (strain 13 / Type A).